Consider the following 853-residue polypeptide: Envelope glycoprotein gp160 (853 aa).

The first 31 residues, 1 to 31 (MRARGIERNCQNWWKWGIMLLGILMTCSAAD), serve as a signal peptide directing secretion. The Extracellular segment spans residues 32-681 (NLWVTVYYGV…ITQWLWYIKI (650 aa)). Cysteine 53 and cysteine 73 are disulfide-bonded. Residues asparagine 87, asparagine 129, asparagine 137, asparagine 143, asparagine 153, asparagine 157, asparagine 183, asparagine 188, asparagine 198, asparagine 235, asparagine 242, asparagine 263, asparagine 277, and asparagine 290 are each glycosylated (N-linked (GlcNAc...) asparagine; by host). 5 disulfides stabilise this stretch: cysteine 118–cysteine 206, cysteine 125–cysteine 197, cysteine 130–cysteine 154, cysteine 219–cysteine 248, and cysteine 229–cysteine 240. A V1 region spans residues 130–153 (CSDELRNNGTMGNNVTTEEKGMKN). A V2 region spans residues 154-197 (CSFNVTTVLKDKKQQVYALFYRLDIVPIDNDSSTNSTNYRLINC). The tract at residues 297 to 329 (CARPYQNTRQRTPIGLGQSLYTTRSRSIIGQAH) is V3. A disulfide bridge links cysteine 297 with cysteine 330. Residues asparagine 331 and asparagine 353 are each glycosylated (N-linked (GlcNAc...) asparagine; by host). The interval 362–372 (SSGGDPEITTH) is CD4-binding loop. Intrachain disulfides connect cysteine 376–cysteine 442 and cysteine 383–cysteine 416. The tract at residues 383–416 (CNTSGLFNSTWNISAWNNITESNNSTNTNITLQC) is V4. Residues asparagine 384, asparagine 390, asparagine 394, asparagine 400, asparagine 405, asparagine 406, asparagine 411, asparagine 445, asparagine 458, asparagine 459, and asparagine 462 are each glycosylated (N-linked (GlcNAc...) asparagine; by host). V5 regions lie at residues 457–468 (INNSTNETFRPG) and 460–468 (STNETFRPG). The interval 509 to 529 (AIGLGAMFLGFLGAAGSTMGA) is fusion peptide. The segment at 571–589 (KQLQARILAVERYLKDQQL) is immunosuppression. Residues cysteine 595 and cysteine 601 are joined by a disulfide bond. N-linked (GlcNAc...) asparagine; by host glycosylation is found at asparagine 608, asparagine 613, asparagine 622, and asparagine 634. Residues 630 to 664 (REIDNYTGLIYSLIEESQTQQEKNEKELLELDKWA) adopt a coiled-coil conformation. Positions 659–680 (ELDKWASLWNWFSITQWLWYIK) are MPER; binding to GalCer. The helical transmembrane segment at 682-702 (FIMIIGGLIGLRIVFAVLSLV) threads the bilayer. Residues 703–853 (NRVRQGYSPL…IRQGLERSLL (151 aa)) are Cytoplasmic-facing. A YXXL motif; contains endocytosis signal motif is present at residues 709–712 (YSPL). A disordered region spans residues 716-738 (TLLPAPRGPDRPEGTEEEGGERG). Over residues 723–738 (GPDRPEGTEEEGGERG) the composition is skewed to basic and acidic residues. 2 S-palmitoyl cysteine; by host lipidation sites follow: cysteine 761 and cysteine 834. The Di-leucine internalization motif signature appears at 852–853 (LL).

This sequence belongs to the HIV-1 env protein family. In terms of assembly, the mature envelope protein (Env) consists of a homotrimer of non-covalently associated gp120-gp41 heterodimers. The resulting complex protrudes from the virus surface as a spike. There seems to be as few as 10 spikes on the average virion. Interacts with host CD4, CCR5 and CXCR4. Gp120 also interacts with the C-type lectins CD209/DC-SIGN and CLEC4M/DC-SIGNR (collectively referred to as DC-SIGN(R)). Gp120 and gp41 interact with GalCer. Gp120 interacts with host ITGA4/ITGB7 complex; on CD4+ T-cells, this interaction results in rapid activation of integrin ITGAL/LFA-1, which facilitates efficient cell-to-cell spreading of HIV-1. Gp120 interacts with cell-associated heparan sulfate; this interaction increases virus infectivity on permissive cells and may be involved in infection of CD4- cells. As to quaternary structure, the mature envelope protein (Env) consists of a homotrimer of non-covalently associated gp120-gp41 heterodimers. The resulting complex protrudes from the virus surface as a spike. There seems to be as few as 10 spikes on the average virion. In terms of processing, highly glycosylated by host. The high number of glycan on the protein is reffered to as 'glycan shield' because it contributes to hide protein sequence from adaptive immune system. Palmitoylation of the transmembrane protein and of Env polyprotein (prior to its proteolytic cleavage) is essential for their association with host cell membrane lipid rafts. Palmitoylation is therefore required for envelope trafficking to classical lipid rafts, but not for viral replication. Post-translationally, specific enzymatic cleavages in vivo yield mature proteins. Envelope glycoproteins are synthesized as an inactive precursor that is heavily N-glycosylated and processed likely by host cell furin in the Golgi to yield the mature SU and TM proteins. The cleavage site between SU and TM requires the minimal sequence [KR]-X-[KR]-R. About 2 of the 9 disulfide bonds of gp41 are reduced by P4HB/PDI, following binding to CD4 receptor.

It localises to the virion membrane. It is found in the host cell membrane. Its subcellular location is the host endosome membrane. Functionally, oligomerizes in the host endoplasmic reticulum into predominantly trimers. In a second time, gp160 transits in the host Golgi, where glycosylation is completed. The precursor is then proteolytically cleaved in the trans-Golgi and thereby activated by cellular furin or furin-like proteases to produce gp120 and gp41. Attaches the virus to the host lymphoid cell by binding to the primary receptor CD4. This interaction induces a structural rearrangement creating a high affinity binding site for a chemokine coreceptor like CXCR4 and/or CCR5. Acts as a ligand for CD209/DC-SIGN and CLEC4M/DC-SIGNR, which are respectively found on dendritic cells (DCs), and on endothelial cells of liver sinusoids and lymph node sinuses. These interactions allow capture of viral particles at mucosal surfaces by these cells and subsequent transmission to permissive cells. HIV subverts the migration properties of dendritic cells to gain access to CD4+ T-cells in lymph nodes. Virus transmission to permissive T-cells occurs either in trans (without DCs infection, through viral capture and transmission), or in cis (following DCs productive infection, through the usual CD4-gp120 interaction), thereby inducing a robust infection. In trans infection, bound virions remain infectious over days and it is proposed that they are not degraded, but protected in non-lysosomal acidic organelles within the DCs close to the cell membrane thus contributing to the viral infectious potential during DCs' migration from the periphery to the lymphoid tissues. On arrival at lymphoid tissues, intact virions recycle back to DCs' cell surface allowing virus transmission to CD4+ T-cells. In terms of biological role, acts as a class I viral fusion protein. Under the current model, the protein has at least 3 conformational states: pre-fusion native state, pre-hairpin intermediate state, and post-fusion hairpin state. During fusion of viral and target intracellular membranes, the coiled coil regions (heptad repeats) assume a trimer-of-hairpins structure, positioning the fusion peptide in close proximity to the C-terminal region of the ectodomain. The formation of this structure appears to drive apposition and subsequent fusion of viral and target cell membranes. Complete fusion occurs in host cell endosomes and is dynamin-dependent, however some lipid transfer might occur at the plasma membrane. The virus undergoes clathrin-dependent internalization long before endosomal fusion, thus minimizing the surface exposure of conserved viral epitopes during fusion and reducing the efficacy of inhibitors targeting these epitopes. Membranes fusion leads to delivery of the nucleocapsid into the cytoplasm. This Human immunodeficiency virus type 1 group M subtype D (isolate ELI) (HIV-1) protein is Envelope glycoprotein gp160.